The sequence spans 552 residues: Outer dynein arm protein 1 (552 aa).

The disordered stretch occupies residues 1–27; it reads MPSADATRGGGSAGSMGKGTLGAGDTL. The segment covering 8–22 has biased composition (gly residues); sequence RGGGSAGSMGKGTLG. 3 coiled-coil regions span residues 28 to 59, 120 to 260, and 331 to 395; these read GHKSVLDKQRAAIEKLRAQNEQLKTELLLENK, SAKE…QELL, and TLFN…YEKR. Disordered regions lie at residues 482–515 and 528–552; these read NRIIIEPPSTTQEEEVEGLEPEPVEEDRPLTREH and LETAIKVRPAGADATGGKRGSPTRR. A compositionally biased stretch (acidic residues) spans 493–506; sequence QEEEVEGLEPEPVE.

Belongs to the ODA1/DCC2 family. As to quaternary structure, component of the outer dynein arm complex.

It localises to the cytoplasm. The protein resides in the cytoskeleton. It is found in the cilium axoneme. In terms of biological role, component of the outer dynein arm complex required for assembly of the outer dynein arm-docking complex (ODA-DC) and the outer dynein arm onto the doublet microtubule. In Chlamydomonas reinhardtii (Chlamydomonas smithii), this protein is Outer dynein arm protein 1 (ODA1).